The sequence spans 116 residues: Protein Rev (116 aa).

A phosphoserine; by host CK2 mark is found at Ser5 and Ser8. Residues 18–26 are homomultimerization; it reads LIKVLYQSN. The tract at residues 23 to 48 is disordered; it reads YQSNPPPSSEGTRQARRNRRRRWRER. The short motif at 34 to 50 is the Nuclear localization signal and RNA-binding (RRE) element; that stretch reads TRQARRNRRRRWRERQR. Residues 36–47 are compositionally biased toward basic residues; that stretch reads QARRNRRRRWRE. Positions 73–84 match the Nuclear export signal and binding to XPO1 motif; the sequence is FQLPPLERLTLD. The disordered stretch occupies residues 90 to 116; sequence GTSGTQGVGSPQILVESPPVLDSGTKE. Ser92 and Ser99 each carry phosphoserine; by host.

It belongs to the HIV-1 REV protein family. In terms of assembly, homomultimer; when bound to the RRE. Multimeric assembly is essential for activity and may involve XPO1. Binds to human KPNB1, XPO1, TNPO1, RANBP5 and IPO7. Interacts with the viral Integrase. Interacts with human KHDRBS1. Interacts with human NAP1; this interaction decreases Rev multimerization and stimulates its activity. Interacts with human DEAD-box helicases DDX3 and DDX24; these interactions may serve for viral RNA export to the cytoplasm and packaging, respectively. Interacts with human PSIP1; this interaction may inhibit HIV-1 DNA integration by promoting dissociation of the Integrase-LEDGF/p75 complex. Post-translationally, asymmetrically arginine dimethylated at one site by host PRMT6. Methylation impairs the RNA-binding activity and export of viral RNA from the nucleus to the cytoplasm. In terms of processing, phosphorylated by protein kinase CK2. Presence of, and maybe binding to the N-terminus of the regulatory beta subunit of CK2 is necessary for CK2-mediated Rev's phosphorylation.

The protein localises to the host nucleus. It is found in the host nucleolus. Its subcellular location is the host cytoplasm. Escorts unspliced or incompletely spliced viral pre-mRNAs (late transcripts) out of the nucleus of infected cells. These pre-mRNAs carry a recognition sequence called Rev responsive element (RRE) located in the env gene, that is not present in fully spliced viral mRNAs (early transcripts). This function is essential since most viral proteins are translated from unspliced or partially spliced pre-mRNAs which cannot exit the nucleus by the pathway used by fully processed cellular mRNAs. Rev itself is translated from a fully spliced mRNA that readily exits the nucleus. Rev's nuclear localization signal (NLS) binds directly to KPNB1/Importin beta-1 without previous binding to KPNA1/Importin alpha-1. KPNB1 binds to the GDP bound form of RAN (Ran-GDP) and targets Rev to the nucleus. In the nucleus, the conversion from Ran-GDP to Ran-GTP dissociates Rev from KPNB1 and allows Rev's binding to the RRE in viral pre-mRNAs. Rev multimerization on the RRE via cooperative assembly exposes its nuclear export signal (NES) to the surface. Rev can then form a complex with XPO1/CRM1 and Ran-GTP, leading to nuclear export of the complex. Conversion from Ran-GTP to Ran-GDP mediates dissociation of the Rev/RRE/XPO1/RAN complex, so that Rev can return to the nucleus for a subsequent round of export. Beside KPNB1, also seems to interact with TNPO1/Transportin-1, RANBP5/IPO5 and IPO7/RANBP7 for nuclear import. The nucleoporin-like HRB/RIP is an essential cofactor that probably indirectly interacts with Rev to release HIV RNAs from the perinuclear region to the cytoplasm. This Human immunodeficiency virus type 1 group M subtype B (isolate YU-2) (HIV-1) protein is Protein Rev.